Reading from the N-terminus, the 163-residue chain is uncharacterized protein (163 aa).

This is an uncharacterized protein from Rickettsia prowazekii (strain Madrid E).